Here is a 207-residue protein sequence, read N- to C-terminus: Protein dct-5 (207 aa).

Residues 13 to 33 (LNFILSIMNSYLFVLIVSIGF) traverse the membrane as a helical segment.

Its subcellular location is the membrane. Functionally, acts downstream of daf-16/foxo to suppress tumors induced by disruption of gld-1. Potentially a direct target of daf-15/foxo. This Caenorhabditis elegans protein is Protein dct-5 (dct-5).